The chain runs to 315 residues: Cytochrome bo(3) ubiquinol oxidase subunit 2 (315 aa).

Positions 1–24 (MRLRKYNKSLGWLSLFAGTVLLSG) are cleaved as a signal peptide. Cys25 carries the N-palmitoyl cysteine lipid modification. Cys25 carries S-diacylglycerol cysteine lipidation. Residues 25 to 50 (CNSALLDPKGQIGLEQRSLILTAFGL) are Periplasmic-facing. The chain crosses the membrane as a helical span at residues 51–68 (MLIVVIPAILMAVGFAWK). Over 69–92 (YRASNKDAKYSPNWSHSNKVEAVV) the chain is Cytoplasmic. A helical membrane pass occupies residues 93-111 (WTVPILIIIFLAVLTWKTT). Topologically, residues 112–315 (HALEPSKPLA…MDMSHAESAH (204 aa)) are periplasmic. The tract at residues 288 to 315 (MDMTQPEGEHSAHEGMEGMDMSHAESAH) is disordered. The span at 294-315 (EGEHSAHEGMEGMDMSHAESAH) shows a compositional bias: basic and acidic residues.

Belongs to the cytochrome c oxidase subunit 2 family. As to quaternary structure, heterooctamer of two A chains, two B chains, two C chains and two D chains.

The protein localises to the cell inner membrane. Its function is as follows. Cytochrome bo(3) ubiquinol terminal oxidase is the component of the aerobic respiratory chain of E.coli that predominates when cells are grown at high aeration. Has proton pump activity across the membrane in addition to electron transfer, pumping 2 protons/electron. This is Cytochrome bo(3) ubiquinol oxidase subunit 2 (cyoA) from Escherichia coli O6:H1 (strain CFT073 / ATCC 700928 / UPEC).